Consider the following 274-residue polypeptide: E3 ubiquitin-protein ligase complex SLX5-SLX8 subunit SLX8 (274 aa).

Disordered stretches follow at residues 1–117 (MARR…GNNI) and 136–159 (ANTP…TNSK). Over residues 13 to 28 (ENLRIKRVRLESVRQN) the composition is skewed to basic and acidic residues. Serine 50 is modified (phosphoserine). The residue at position 66 (threonine 66) is a Phosphothreonine. The span at 66–75 (TSEEDGDDDL) shows a compositional bias: acidic residues. Serine 67 carries the post-translational modification Phosphoserine. Basic and acidic residues predominate over residues 97–108 (GNHDRETMHTEE). The RING-type zinc finger occupies 206–250 (CPICFEPPETALMTLCGHVFCCPCLFQMVNSSRTCRQFGHCALCR).

In terms of assembly, component of the heterodimeric SUMO-targeted ubiquitin ligase (STUbL) complex composed of SLX5 and SLX8.

It localises to the nucleus. The protein resides in the chromosome. The protein localises to the centromere. It is found in the kinetochore. It carries out the reaction S-ubiquitinyl-[E2 ubiquitin-conjugating enzyme]-L-cysteine + [acceptor protein]-L-lysine = [E2 ubiquitin-conjugating enzyme]-L-cysteine + N(6)-ubiquitinyl-[acceptor protein]-L-lysine.. Its pathway is protein modification; protein ubiquitination. Functionally, component of the SUMO-targeted ubiquitin ligase (STUbL) complex SLX5/SLX8 that mediates ubiquitination and subsequent desumoylation of sumoylated proteins and proteins containing SUMO-like domains for their degradation. The STUbL complex SLX5/SLX8 stimulates ubiquitin conjugating enzymes, including UBC1, UBC4, UBC5 and UBC13-MMS2, and mediates the proteolytic down-regulation of sumoylated proteins. The STUbL complex SLX5/SLX8 is involved in ubiquitin-mediated degradation of histone variant CSE4, preventing mislocalization to euchromatin. The complex plays an essential role in maintenance of chromosome stability and links SUMO-dependent ubiquitination to a centromere-specific function during mitosis. The complex is involved in proteolysis of spindle positioning protein KAR9 and ensures correct spindle function by regulating levels of microtubule-associated proteins. During replication, the complex helps to prevent DNA lesions via recombination and has a role in localizing the DNA damage protein DCD2. The complex especially ubiquitinates the nuclease YEN1 and prevents persistent accumulation of a fraction of YEN1 associated with sites of activity in late G2/M and helps maintain the balance between pro- and anti-crossover pathways during homologous recombination. It is also involved in ubiquitin-mediated degradation of DNA repair proteins RAD52 and RAD57. Finally, the complex is recruited to distinct genomic hotspots of non-H2B protein ubiquitination (ub-hotspots) by the sumoylated transcription factor-like protein EUC1 where it ubiquitinates EUC1 and presumably other targets. The polypeptide is E3 ubiquitin-protein ligase complex SLX5-SLX8 subunit SLX8 (SLX8) (Saccharomyces cerevisiae (strain ATCC 204508 / S288c) (Baker's yeast)).